Here is a 432-residue protein sequence, read N- to C-terminus: Neuronal pentraxin-1 (432 aa).

The N-terminal stretch at Met1 to Ala22 is a signal peptide. Residues Glu90–Ser122 form a disordered region. N-linked (GlcNAc...) asparagine glycans are attached at residues Asn154 and Asn193. One can recognise a Pentraxin (PTX) domain in the interval Asp226 to Cys428. Cysteines 256 and 316 form a disulfide. Positions 280, 358, 359, 360, and 370 each coordinate Ca(2+).

Homooligomer or heterooligomer (probably pentamer) with neuronal pentraxin receptor (NPTXR). It depends on Ca(2+) as a cofactor.

The protein resides in the secreted. Its subcellular location is the cytoplasmic vesicle. It is found in the secretory vesicle. The protein localises to the endoplasmic reticulum. Functionally, may be involved in mediating uptake of synaptic material during synapse remodeling or in mediating the synaptic clustering of AMPA glutamate receptors at a subset of excitatory synapses. The chain is Neuronal pentraxin-1 (NPTX1) from Homo sapiens (Human).